A 323-amino-acid polypeptide reads, in one-letter code: Aldo-keto reductase family 1 member C4 (323 aa).

NADP(+) is bound by residues 20 to 24 and Asp50; that span reads GFGTY. Tyr55 (proton donor) is an active-site residue. His117 lines the substrate pocket. NADP(+) is bound by residues 166–167, Gln190, 216–221, and 270–280; these read SN, HSALGT, and KSYNEQRIREN.

It belongs to the aldo/keto reductase family. Monomer. Post-translationally, the N-terminus is blocked. As to expression, liver specific.

Its subcellular location is the cytoplasm. The protein resides in the cytosol. The enzyme catalyses a 3alpha-hydroxysteroid + NADP(+) = a 3-oxosteroid + NADPH + H(+). It catalyses the reaction a 3alpha-hydroxysteroid + NAD(+) = a 3-oxosteroid + NADH + H(+). The catalysed reaction is 5alpha-androstane-3alpha,17beta-diol + NADP(+) = 17beta-hydroxy-5alpha-androstan-3-one + NADPH + H(+). It carries out the reaction 5alpha-androstane-3beta,17beta-diol + NADP(+) = 17beta-hydroxy-5alpha-androstan-3-one + NADPH + H(+). The enzyme catalyses 5alpha-androstane-3alpha,17beta-diol + NAD(+) = 17beta-hydroxy-5alpha-androstan-3-one + NADH + H(+). It catalyses the reaction 17beta-estradiol + NADP(+) = estrone + NADPH + H(+). The catalysed reaction is 17beta-estradiol + NAD(+) = estrone + NADH + H(+). It carries out the reaction (20S)-hydroxypregn-4-en-3-one + NADP(+) = progesterone + NADPH + H(+). The enzyme catalyses (20S)-hydroxypregn-4-en-3-one + NAD(+) = progesterone + NADH + H(+). It catalyses the reaction androsterone + NADP(+) = 5alpha-androstan-3,17-dione + NADPH + H(+). The catalysed reaction is testosterone + NADP(+) = androst-4-ene-3,17-dione + NADPH + H(+). It carries out the reaction testosterone + NAD(+) = androst-4-ene-3,17-dione + NADH + H(+). The enzyme catalyses 3alpha-hydroxy-5alpha-androstane 17-O-(beta-D-glucuronate) + NADP(+) = 5alpha-dihydrotestosterone 17-O-(beta-D-glucuronate) + NADPH + H(+). It catalyses the reaction (3beta,5alpha,17beta)-3-hydroxy-androstan-17-yl sulfate + NADP(+) = 5alpha-dihydrotestosterone sulfate + NADPH + H(+). The catalysed reaction is 5alpha-androstane-3alpha,17beta-diol + NAD(+) = androsterone + NADH + H(+). It carries out the reaction chlordecone alcohol + NADP(+) = chlordecone + NADPH + H(+). It participates in steroid metabolism. With respect to regulation, inhibited by nonsteroidal the anti-inflammatory drugs (NSAID) flufenamic. The oxidation reaction is inhibited by low micromolar concentrations of NADPH. Cytosolic aldo-keto reductase that catalyzes the NADH and NADPH-dependent reduction of ketosteroids to hydroxysteroids. Liver specific enzyme that acts as an NAD(P)(H)-dependent 3-, 17- and 20-ketosteroid reductase on the steroid nucleus and side chain. Displays the ability to catalyze both oxidation and reduction in vitro, but most probably acts as a reductase in vivo since the oxidase activity measured in vitro is inhibited by physiological concentration of NADPH. Acts preferentially as a 3-alpha-hydroxysteroid dehydrogenase (HSD) with a subsidiary 3-beta-HSD activity. Catalyzes efficiently the transformation of the potent androgen 5-alpha-dihydrotestosterone (5alpha-DHT or 17beta-hydroxy-5alpha-androstan-3-one) into the less active form, 5-alpha-androstan-3-alpha,17-beta-diol (3-alpha-diol). Catalyzes the reduction of estrone into 17beta-estradiol but with low efficiency. Metabolizes a broad spectrum of natural and synthetic therapeutic steroid and plays an important role in metabolism of androgens, estrogens, progestereone and conjugated steroids. Catalyzes the biotransformation of the pesticide chlordecone (kepone) to its corresponding alcohol leading to increased biliary excretion of the pesticide and concomitant reduction of its neurotoxicity since bile is the major excretory route. This is Aldo-keto reductase family 1 member C4 (AKR1C4) from Homo sapiens (Human).